Reading from the N-terminus, the 414-residue chain is Cytochrome P450 GfsF (414 aa).

The segment at 1-32 is disordered; the sequence is MTDTTLVEAGDPAEDAPEWPMKRDTGCPFDPP. Residues histidine 75, histidine 107, arginine 111, arginine 303, histidine 361, and cysteine 363 each coordinate heme b.

The protein belongs to the cytochrome P450 family. As to quaternary structure, monomer. The cofactor is heme b.

The protein operates within antibiotic biosynthesis. Functionally, involved in the synthesis of the 16-membered macrolide antibiotics FD-891 and FD-892. Consecutively catalyzes epoxidation of C8-C9 and then hydroxylation at C10 to convert 25-O-methyl-FD-892 to FD-891. Consecutively catalyzes epoxidation of C8-C9 and then hydroxylation at C10 to convert 8,9-epoxy-FD-892 to 25-O-demethyl-FD-891 as well as converting 25-oxo-FD-892 to 8,9-epoxy-25-oxo-FD-892 and 8,9-epoxy-10-hydroxy-25-oxo-FD-892. In vitro is furnished with P.putida putidaredoxin and putidaredoxin reductase to provide the required two-electron reduction. The sequence is that of Cytochrome P450 GfsF from Streptomyces halstedii.